A 264-amino-acid chain; its full sequence is 3-methyl-2-oxobutanoate hydroxymethyltransferase (264 aa).

The Mg(2+) site is built by aspartate 45 and aspartate 84. Residues aspartate 45–serine 46, aspartate 84, and lysine 112 each bind 3-methyl-2-oxobutanoate. Glutamate 114 contacts Mg(2+). Residue glutamate 181 is the Proton acceptor of the active site.

This sequence belongs to the PanB family. In terms of assembly, homodecamer; pentamer of dimers. The cofactor is Mg(2+).

The protein localises to the cytoplasm. The enzyme catalyses 3-methyl-2-oxobutanoate + (6R)-5,10-methylene-5,6,7,8-tetrahydrofolate + H2O = 2-dehydropantoate + (6S)-5,6,7,8-tetrahydrofolate. It functions in the pathway cofactor biosynthesis; (R)-pantothenate biosynthesis; (R)-pantoate from 3-methyl-2-oxobutanoate: step 1/2. In terms of biological role, catalyzes the reversible reaction in which hydroxymethyl group from 5,10-methylenetetrahydrofolate is transferred onto alpha-ketoisovalerate to form ketopantoate. The sequence is that of 3-methyl-2-oxobutanoate hydroxymethyltransferase from Photobacterium profundum (strain SS9).